The chain runs to 210 residues: 23.6 kDa heat shock protein, mitochondrial (210 aa).

The transit peptide at 1–31 (MASALALKRLLSSSIAPRSRSVLRPAVSSRL) directs the protein to the mitochondrion. Positions 100–210 (MGASGARRGW…RNDVRQIEIN (111 aa)) constitute a sHSP domain. The interval 145–165 (GEGKNEEDGGEEGESGNRRFT) is disordered.

Belongs to the small heat shock protein (HSP20) family. In terms of assembly, may form oligomeric structures.

Its subcellular location is the mitochondrion. This chain is 23.6 kDa heat shock protein, mitochondrial (HSP23.6), found in Arabidopsis thaliana (Mouse-ear cress).